Consider the following 219-residue polypeptide: Outer spore wall protein 4 (219 aa).

Positions 1–19 (MRFQLFIYFYFTIVVIAGT) are cleaved as a signal peptide. Topologically, residues 20–170 (NTIQQFSDAG…KKKRLDRIKR (151 aa)) are extracellular. Asparagine 42, asparagine 62, and asparagine 136 each carry an N-linked (GlcNAc...) asparagine glycan. The chain crosses the membrane as a helical span at residues 171-191 (ILTVSLLELGLAQGVADLCAV). At 192 to 193 (AP) the chain is on the cytoplasmic side. Residues 194-214 (FACLLGVTVGSIGFIFWLALI) traverse the membrane as a helical segment. Over 215–219 (YNAIQ) the chain is Extracellular.

Belongs to the OSW4/6 family. N-glycosylated.

It is found in the membrane. Its function is as follows. Involved in spore wall assembly. May be involved in maintaining genome integrity. This Saccharomyces cerevisiae (strain ATCC 204508 / S288c) (Baker's yeast) protein is Outer spore wall protein 4.